The sequence spans 394 residues: UPF0284 protein SYNW1869 (394 aa).

The protein belongs to the UPF0284 family.

This is UPF0284 protein SYNW1869 from Parasynechococcus marenigrum (strain WH8102).